The following is a 551-amino-acid chain: Cytochrome c oxidase subunit 1 (551 aa).

The chain crosses the membrane as a helical span at residues Thr34 to Ile54. Gly62 is a binding site for Ca(2+). His79 contributes to the Fe(II)-heme a binding site. A run of 6 helical transmembrane segments spans residues Leu81–Ile101, Ala126–Ile146, Val163–Ala183, Thr209–Phe229, Leu252–Met272, and Val285–Val305. His258 is a binding site for Cu cation. The 1'-histidyl-3'-tyrosine (His-Tyr) cross-link spans His258–Tyr262. Tyr262 serves as a coordination point for O2. 2 residues coordinate Cu cation: His308 and His309. 2 consecutive transmembrane segments (helical) span residues Ala326–Ala346 and Ala356–Leu376. His386 and Asp387 together coordinate Mg(2+). 3 helical membrane passes run Val391–Leu411, Phe432–Ser452, and Gly475–Val495. A heme a3-binding site is contributed by His394. His396 is a Fe(II)-heme a binding site.

The protein belongs to the heme-copper respiratory oxidase family. In terms of assembly, component of the cytochrome c oxidase (complex IV, CIV), a multisubunit enzyme composed of a catalytic core of 3 subunits and several supernumerary subunits. The complex exists as a monomer or a dimer and forms supercomplexes (SCs) in the inner mitochondrial membrane with ubiquinol-cytochrome c oxidoreductase (cytochrome b-c1 complex, complex III, CIII). The cofactor is heme. Requires Cu cation as cofactor.

It localises to the mitochondrion inner membrane. It catalyses the reaction 4 Fe(II)-[cytochrome c] + O2 + 8 H(+)(in) = 4 Fe(III)-[cytochrome c] + 2 H2O + 4 H(+)(out). It functions in the pathway energy metabolism; oxidative phosphorylation. Component of the cytochrome c oxidase, the last enzyme in the mitochondrial electron transport chain which drives oxidative phosphorylation. The respiratory chain contains 3 multisubunit complexes succinate dehydrogenase (complex II, CII), ubiquinol-cytochrome c oxidoreductase (cytochrome b-c1 complex, complex III, CIII) and cytochrome c oxidase (complex IV, CIV), that cooperate to transfer electrons derived from NADH and succinate to molecular oxygen, creating an electrochemical gradient over the inner membrane that drives transmembrane transport and the ATP synthase. Cytochrome c oxidase is the component of the respiratory chain that catalyzes the reduction of oxygen to water. Electrons originating from reduced cytochrome c in the intermembrane space (IMS) are transferred via the dinuclear copper A center (CU(A)) of subunit 2 and heme A of subunit 1 to the active site in subunit 1, a binuclear center (BNC) formed by heme A3 and copper B (CU(B)). The BNC reduces molecular oxygen to 2 water molecules using 4 electrons from cytochrome c in the IMS and 4 protons from the mitochondrial matrix. This is Cytochrome c oxidase subunit 1 (COI) from Mytilus edulis (Blue mussel).